Here is a 248-residue protein sequence, read N- to C-terminus: Probable transcriptional regulatory protein Ccel_0181 (248 aa).

Belongs to the TACO1 family.

The protein resides in the cytoplasm. This Ruminiclostridium cellulolyticum (strain ATCC 35319 / DSM 5812 / JCM 6584 / H10) (Clostridium cellulolyticum) protein is Probable transcriptional regulatory protein Ccel_0181.